The sequence spans 181 residues: ATP synthase subunit delta (181 aa).

It belongs to the ATPase delta chain family. In terms of assembly, F-type ATPases have 2 components, F(1) - the catalytic core - and F(0) - the membrane proton channel. F(1) has five subunits: alpha(3), beta(3), gamma(1), delta(1), epsilon(1). F(0) has three main subunits: a(1), b(2) and c(10-14). The alpha and beta chains form an alternating ring which encloses part of the gamma chain. F(1) is attached to F(0) by a central stalk formed by the gamma and epsilon chains, while a peripheral stalk is formed by the delta and b chains.

It is found in the cell membrane. Its function is as follows. F(1)F(0) ATP synthase produces ATP from ADP in the presence of a proton or sodium gradient. F-type ATPases consist of two structural domains, F(1) containing the extramembraneous catalytic core and F(0) containing the membrane proton channel, linked together by a central stalk and a peripheral stalk. During catalysis, ATP synthesis in the catalytic domain of F(1) is coupled via a rotary mechanism of the central stalk subunits to proton translocation. Functionally, this protein is part of the stalk that links CF(0) to CF(1). It either transmits conformational changes from CF(0) to CF(1) or is implicated in proton conduction. This Priestia megaterium (strain ATCC 12872 / QMB1551) (Bacillus megaterium) protein is ATP synthase subunit delta.